The chain runs to 354 residues: Uroporphyrinogen decarboxylase (354 aa).

Substrate is bound by residues 27 to 31 (RQAGR), Asp-77, Tyr-154, Ser-209, and His-327.

It belongs to the uroporphyrinogen decarboxylase family. Homodimer.

It is found in the cytoplasm. The enzyme catalyses uroporphyrinogen III + 4 H(+) = coproporphyrinogen III + 4 CO2. It participates in porphyrin-containing compound metabolism; protoporphyrin-IX biosynthesis; coproporphyrinogen-III from 5-aminolevulinate: step 4/4. In terms of biological role, catalyzes the decarboxylation of four acetate groups of uroporphyrinogen-III to yield coproporphyrinogen-III. In Methylobacillus flagellatus (strain ATCC 51484 / DSM 6875 / VKM B-1610 / KT), this protein is Uroporphyrinogen decarboxylase.